A 155-amino-acid chain; its full sequence is MRRRKAPVREIMPDPVYGSKVLTKFINKIMFDGKKSTAEKIIYSAMDIISSRGEKTGIDTFNEAIENIKPIIEVKSRRVGGATYQVPVEVRPVRQLSLAIRWLVDASRKRNERTMAERLANELMDASSDKGNAFKKKEDTYRMAEANKAFAHYRW.

The protein belongs to the universal ribosomal protein uS7 family. As to quaternary structure, part of the 30S ribosomal subunit. Contacts proteins S9 and S11.

Its function is as follows. One of the primary rRNA binding proteins, it binds directly to 16S rRNA where it nucleates assembly of the head domain of the 30S subunit. Is located at the subunit interface close to the decoding center, probably blocks exit of the E-site tRNA. This chain is Small ribosomal subunit protein uS7, found in Sulfurimonas denitrificans (strain ATCC 33889 / DSM 1251) (Thiomicrospira denitrificans (strain ATCC 33889 / DSM 1251)).